Consider the following 518-residue polypeptide: Probable glycosyltransferase At5g03795 (518 aa).

Residues 1-25 (MGDEDVDGKCKNMSACSSTTSYSTK) lie on the Cytoplasmic side of the membrane. A helical; Signal-anchor for type II membrane protein membrane pass occupies residues 26–46 (LFLFMVPLVVISGFVFVNIGP). The Lumenal portion of the chain corresponds to 47-518 (KDSTSLLTSL…RRLNVKIREV (472 aa)). N104, N113, N120, N282, and N320 each carry an N-linked (GlcNAc...) asparagine glycan.

Belongs to the glycosyltransferase 47 family.

The protein localises to the golgi apparatus membrane. Its function is as follows. May be involved in cell wall biosynthesis. This is Probable glycosyltransferase At5g03795 from Arabidopsis thaliana (Mouse-ear cress).